Here is a 400-residue protein sequence, read N- to C-terminus: Nicotinate phosphoribosyltransferase (400 aa).

At His220 the chain carries Phosphohistidine; by autocatalysis.

The protein belongs to the NAPRTase family. In terms of processing, transiently phosphorylated on a His residue during the reaction cycle. Phosphorylation strongly increases the affinity for substrates and increases the rate of nicotinate D-ribonucleotide production. Dephosphorylation regenerates the low-affinity form of the enzyme, leading to product release.

The catalysed reaction is nicotinate + 5-phospho-alpha-D-ribose 1-diphosphate + ATP + H2O = nicotinate beta-D-ribonucleotide + ADP + phosphate + diphosphate. It participates in cofactor biosynthesis; NAD(+) biosynthesis; nicotinate D-ribonucleotide from nicotinate: step 1/1. Its function is as follows. Catalyzes the synthesis of beta-nicotinate D-ribonucleotide from nicotinate and 5-phospho-D-ribose 1-phosphate at the expense of ATP. The polypeptide is Nicotinate phosphoribosyltransferase (Escherichia coli O17:K52:H18 (strain UMN026 / ExPEC)).